The sequence spans 356 residues: MITKQQVLEFLKDYDLDNITIATICSHSSLQIFDGARKEGFRTLGICVGKPPKFYDAFPRAKPDEYLVLEDYEDLINRAEELRKKNTIIIPHSSLIYYLGRENFTGMAVPTFGNRTSIEWESDRDKESRWFLGAGIQMPKKIDDPHDIKGPVMVEYEGAKGGKGFFVAKNYKEFSELVDHTQKYTIHEYINGTRYDLHYFYSPIRNDGYTLSKGSLELLSMDRRVESNADEIFRLGSPRELIESGICPTYVLTGNVPLVARESILSRIFSLGEQVVEESLALFGGITGAFCIEAVITDSLDIKVFELSSRIVSGTNLYISGSPYSDLMQKRLSTGRRIALEIKEAAKSNQLDKILS.

5-amino-1-(5-phospho-beta-D-ribosyl)imidazole-4-carboxamide contacts are provided by histidine 27 and serine 94. In terms of domain architecture, ATP-grasp spans 101 to 333 (RENFTGMAVP…YSDLMQKRLS (233 aa)). ATP is bound by residues 145–196 (PHDI…TRYD) and glutamate 226. A 5-amino-1-(5-phospho-beta-D-ribosyl)imidazole-4-carboxamide-binding site is contributed by asparagine 255. Mg(2+)-binding residues include glutamate 293 and glutamate 306.

This sequence belongs to the phosphohexose mutase family. Requires Mg(2+) as cofactor. Mn(2+) is required as a cofactor.

The catalysed reaction is 5-amino-1-(5-phospho-beta-D-ribosyl)imidazole-4-carboxamide + formate + ATP = 5-formamido-1-(5-phospho-D-ribosyl)imidazole-4-carboxamide + ADP + phosphate. It functions in the pathway purine metabolism; IMP biosynthesis via de novo pathway; 5-formamido-1-(5-phospho-D-ribosyl)imidazole-4-carboxamide from 5-amino-1-(5-phospho-D-ribosyl)imidazole-4-carboxamide (formate route): step 1/1. Its function is as follows. Catalyzes the ATP- and formate-dependent formylation of 5-aminoimidazole-4-carboxamide-1-beta-d-ribofuranosyl 5'-monophosphate (AICAR) to 5-formaminoimidazole-4-carboxamide-1-beta-d-ribofuranosyl 5'-monophosphate (FAICAR) in the absence of folates. This is 5-formaminoimidazole-4-carboxamide-1-(beta)-D-ribofuranosyl 5'-monophosphate synthetase 2 from Methanosarcina mazei (strain ATCC BAA-159 / DSM 3647 / Goe1 / Go1 / JCM 11833 / OCM 88) (Methanosarcina frisia).